A 175-amino-acid chain; its full sequence is uncharacterized protein (175 aa).

The N-terminal 11 residues, 1–11 (METWRKGSFRN), are a transit peptide targeting the mitochondrion. The segment at 29–48 (QGSILSQASTAGGDHEEYSN) is disordered.

The protein resides in the mitochondrion. This is an uncharacterized protein from Mus musculus (Mouse).